The following is a 477-amino-acid chain: Putative WAS protein family homolog 4 (477 aa).

The segment at 1 to 180 (MSGVMCLKAS…EGLGGLPSNI (180 aa)) is WHD1. 2 disordered regions span residues 310–420 (QDGV…QGGH) and 434–477 (KGIS…DWES). Residues 315–327 (TPPPPPPPPPPAP) show a composition bias toward pro residues. A VCA region spans residues 362–477 (QGAPREVVDP…QAEDEDDWES (116 aa)). One can recognise a WH2 domain in the interval 374 to 396 (GWATLLESIRQAGGIGKAKLRSM). The segment covering 395–411 (SMKERKLEKQQQKEQEQ) has biased composition (basic and acidic residues). A compositionally biased stretch (gly residues) spans 437–449 (SGKGPGAGDGPGG).

The protein belongs to the WASH1 family. In terms of assembly, interacts (via WHD1 region) with WASHC2C; the interaction is direct.

The protein resides in the early endosome membrane. The protein localises to the recycling endosome membrane. May act as a nucleation-promoting factor at the surface of endosomes, where it recruits and activates the Arp2/3 complex to induce actin polymerization, playing a key role in the fission of tubules that serve as transport intermediates during endosome sorting. This is Putative WAS protein family homolog 4 (WASH4P) from Homo sapiens (Human).